We begin with the raw amino-acid sequence, 246 residues long: UPF0309 protein ABC0887 (246 aa).

Residues 33–212 enclose the SIS domain; sequence MVHAIKEGKS…VLKMIEQLEE (180 aa).

This sequence belongs to the UPF0309 family.

The chain is UPF0309 protein ABC0887 from Shouchella clausii (strain KSM-K16) (Alkalihalobacillus clausii).